The chain runs to 777 residues: MSPLLTWNLICVSSRWYTILCLKNKVKFWLGTRLVHEPESMESRSSPYIRPSPYAGGVHPHFEEEDDRSKLHASALYSERRTSSRKSLRSQKIDYHTTTIKSLWFDFCARTSSHGIPYVATSSFFGRYVWAALFMCMLMAFLLQTYWTMSEYLQYRTIIEMQLQFEAAAFPAATVCNLNAFKYSELTQYEEIKEGFDYWERVINARMMSDSMKPGGDILEAISVRKKRSKSRDQLLFPIDDEDLEGAVYQPVFVRCTCMNMEQCVPNRNPLEVNASICMCFEDVTRGLIWPCYPTSVWTVKKCSGCSISNTCPDPDGPNASKQIAKHNSPLPCLCQSISHHCMVHPKDEIRWWNPNNYTVYSVTEPPTTEITETEEAFGLSDLKDAGAITTQTKENLIFLVAALPRETRRNLSYTLNEFVLRCSFNSKDCSMERDFKLHVDPEYGNCYTFNFNDSVELKNSRAGPMYGLRLLLNVHQSDYMPTTEAAGVRLVVHEQDQEPFPDTFGYSAPTGFISSFGLKTKELHRLSAPWGNCSDTFRPVPYIYNEHYSPEGCHRNCFQLKVLEICGCGDPRFPLPSEEHRHCNAKSKIDRQCLSNLTSDSGGYHHLHEQCECRQPCHEKVFETAYSASAWPSQNFKIGTDCPAVSDIFNDTEACTEYYRQNTAYIEIYYEQLNFESLKETAGYTLVNLFSDFGGNIGLWIGFSVITFAEFAELFCEICKLMYFKGIVYVQKKMQGKEYTSSSLMHIDFLQRSPKKSQPGEDEVSTNESTKELMSK.

The Cytoplasmic segment spans residues 1–128 (MSPLLTWNLI…VATSSFFGRY (128 aa)). A helical transmembrane segment spans residues 129–149 (VWAALFMCMLMAFLLQTYWTM). The Extracellular segment spans residues 150 to 689 (SEYLQYRTII…KETAGYTLVN (540 aa)). N274, N319, N357, N411, N453, N533, and N597 each carry an N-linked (GlcNAc...) asparagine glycan. The chain crosses the membrane as a helical span at residues 690 to 710 (LFSDFGGNIGLWIGFSVITFA). Residues 711–777 (EFAELFCEIC…NESTKELMSK (67 aa)) are Cytoplasmic-facing. The interval 752-777 (QRSPKKSQPGEDEVSTNESTKELMSK) is disordered.

Belongs to the amiloride-sensitive sodium channel (TC 1.A.6) family.

The protein resides in the membrane. In terms of biological role, sodium permeable non-voltage-sensitive ion channel. Involved in the activity-dependent removal of selected presynaptic proteins, such as synaptobrevin snb-1, and Ras-related rab-3, in the remodeling of GABAergic motor neurons. In Caenorhabditis elegans, this protein is Degenerin unc-8.